A 420-amino-acid chain; its full sequence is Tyrosine--tRNA ligase 1 (420 aa).

Residue Tyr-35 participates in L-tyrosine binding. The 'HIGH' region motif lies at 40 to 49 (PTAGSLHIGH). Residues Tyr-172 and Gln-176 each contribute to the L-tyrosine site. Residues 232–236 (KFGKT) carry the 'KMSKS' region motif. Lys-235 lines the ATP pocket. An S4 RNA-binding domain is found at 355-419 (INIAELLVKS…GKKQFRLIKL (65 aa)).

Belongs to the class-I aminoacyl-tRNA synthetase family. TyrS type 1 subfamily. Homodimer.

It is found in the cytoplasm. The enzyme catalyses tRNA(Tyr) + L-tyrosine + ATP = L-tyrosyl-tRNA(Tyr) + AMP + diphosphate + H(+). Catalyzes the attachment of tyrosine to tRNA(Tyr) in a two-step reaction: tyrosine is first activated by ATP to form Tyr-AMP and then transferred to the acceptor end of tRNA(Tyr). This chain is Tyrosine--tRNA ligase 1, found in Pseudoalteromonas translucida (strain TAC 125).